The chain runs to 255 residues: Hydroxyacylglutathione hydrolase (255 aa).

The Zn(2+) site is built by H56, H58, D60, H61, H114, D133, and H171.

Belongs to the metallo-beta-lactamase superfamily. Glyoxalase II family. Monomer. Requires Zn(2+) as cofactor.

The catalysed reaction is an S-(2-hydroxyacyl)glutathione + H2O = a 2-hydroxy carboxylate + glutathione + H(+). It participates in secondary metabolite metabolism; methylglyoxal degradation; (R)-lactate from methylglyoxal: step 2/2. Its function is as follows. Thiolesterase that catalyzes the hydrolysis of S-D-lactoyl-glutathione to form glutathione and D-lactic acid. This chain is Hydroxyacylglutathione hydrolase, found in Roseobacter denitrificans (strain ATCC 33942 / OCh 114) (Erythrobacter sp. (strain OCh 114)).